A 172-amino-acid chain; its full sequence is Bcl-2-related protein A1 (172 aa).

Positions 77 to 97 (KEFEDGIINWGRIVTIFAFGG) match the BH1 motif. The short motif at 132–147 (EWIRQNGGWEDGFIKK) is the BH2 element.

Belongs to the Bcl-2 family. Interacts directly with BCL2L11/BIM and PMAIP1. Interacts directly with BAK1, BID, BMF and BBC3. Interacts with BOP. Interacts with isoform 3, isoform 4 and isoform 5 of ING4. Interacts with UBQLN4. In terms of tissue distribution, expressed in hemopoietic tissues, including bone marrow, spleen and thymus.

Its subcellular location is the cytoplasm. Its function is as follows. Retards apoptosis induced by IL-3 deprivation. May function in the response of hemopoietic cells to external signals and in maintaining endothelial survival during infection. Can inhibit apoptosis induced by serum starvation in the mammary epithelial cell line HC11. The sequence is that of Bcl-2-related protein A1 (Bcl2a1) from Mus musculus (Mouse).